Consider the following 134-residue polypeptide: Proline-rich protein 4 (134 aa).

The N-terminal stretch at 1-16 (MLLVLLSVVLLALSSA) is a signal peptide. A disordered region spans residues 28-134 (FTFTIPDVED…ARHPQEQPLW (107 aa)). A compositionally biased stretch (pro residues) spans 47-59 (QRPPPEGLLPRPP). Residues 110 to 119 (VSLQEASSFF) show a composition bias toward polar residues. The span at 120-134 (QRDRPARHPQEQPLW) shows a compositional bias: basic and acidic residues.

As to expression, abundantly expressed in lacrimal gland where it is found in the acinar cells but not in the intralobular ducts. Also found in the submandibular gland, the parotid and sublingual glands.

The protein resides in the secreted. The chain is Proline-rich protein 4 (PRR4) from Homo sapiens (Human).